A 198-amino-acid chain; its full sequence is GTP cyclohydrolase 1 (198 aa).

Zn(2+) contacts are provided by Cys87, His90, and Cys158.

It belongs to the GTP cyclohydrolase I family. In terms of assembly, homomer.

It catalyses the reaction GTP + H2O = 7,8-dihydroneopterin 3'-triphosphate + formate + H(+). It functions in the pathway cofactor biosynthesis; 7,8-dihydroneopterin triphosphate biosynthesis; 7,8-dihydroneopterin triphosphate from GTP: step 1/1. The protein is GTP cyclohydrolase 1 of Janthinobacterium sp. (strain Marseille) (Minibacterium massiliensis).